The primary structure comprises 71 residues: Small ribosomal subunit protein bS21 (71 aa).

This sequence belongs to the bacterial ribosomal protein bS21 family.

This Buchnera aphidicola subsp. Schizaphis graminum (strain Sg) protein is Small ribosomal subunit protein bS21.